Consider the following 185-residue polypeptide: Ribosome-recycling factor (185 aa).

The protein belongs to the RRF family.

The protein resides in the cytoplasm. Responsible for the release of ribosomes from messenger RNA at the termination of protein biosynthesis. May increase the efficiency of translation by recycling ribosomes from one round of translation to another. The chain is Ribosome-recycling factor from Acidothermus cellulolyticus (strain ATCC 43068 / DSM 8971 / 11B).